Reading from the N-terminus, the 339-residue chain is Nicotinate-nucleotide--dimethylbenzimidazole phosphoribosyltransferase (339 aa).

The active-site Proton acceptor is E306.

The protein belongs to the CobT family.

It carries out the reaction 5,6-dimethylbenzimidazole + nicotinate beta-D-ribonucleotide = alpha-ribazole 5'-phosphate + nicotinate + H(+). Its pathway is nucleoside biosynthesis; alpha-ribazole biosynthesis; alpha-ribazole from 5,6-dimethylbenzimidazole: step 1/2. In terms of biological role, catalyzes the synthesis of alpha-ribazole-5'-phosphate from nicotinate mononucleotide (NAMN) and 5,6-dimethylbenzimidazole (DMB). This is Nicotinate-nucleotide--dimethylbenzimidazole phosphoribosyltransferase from Brucella canis (strain ATCC 23365 / NCTC 10854 / RM-666).